We begin with the raw amino-acid sequence, 288 residues long: HTH-type transcriptional regulator YofA (288 aa).

The 58-residue stretch at 1–58 folds into the HTH lysR-type domain; it reads MESGDLKIFQAVARKGSISKAAESLHYVQSNVTNRIQQLERQLQTQLFYRTNRGMTLT. Residues 18-37 constitute a DNA-binding region (H-T-H motif); sequence ISKAAESLHYVQSNVTNRIQ.

The protein belongs to the LysR transcriptional regulatory family.

The protein localises to the cytoplasm. In terms of biological role, regulates expression of the cell division protein ftsW, and is essential for cell viability during stationary phase. This Bacillus velezensis (strain DSM 23117 / BGSC 10A6 / LMG 26770 / FZB42) (Bacillus amyloliquefaciens subsp. plantarum) protein is HTH-type transcriptional regulator YofA (yofA).